A 189-amino-acid polypeptide reads, in one-letter code: Small ribosomal subunit protein uS5 (189 aa).

The 64-residue stretch at 27–90 folds into the S5 DRBM domain; the sequence is FEERLLEAAR…EDAKKKTIRV (64 aa).

Belongs to the universal ribosomal protein uS5 family. As to quaternary structure, part of the 30S ribosomal subunit. Contacts proteins S4 and S8.

In terms of biological role, with S4 and S12 plays an important role in translational accuracy. Its function is as follows. Located at the back of the 30S subunit body where it stabilizes the conformation of the head with respect to the body. This Hydrogenobaculum sp. (strain Y04AAS1) protein is Small ribosomal subunit protein uS5.